The primary structure comprises 580 residues: Probable mediator of RNA polymerase II transcription subunit 26a (580 aa).

Positions 108 to 183 constitute a TFIIS N-terminal domain; sequence DEVMRIRDIL…AEWKRLVDQW (76 aa). Composition is skewed to basic and acidic residues over residues 244–255, 280–290, and 299–309; these read RHSVESKHERKS, QTRREEADVRP, and VEPKRQTKQSR. Residues 244–337 are disordered; sequence RHSVESKHER…RKLAGPQQDK (94 aa). A coiled-coil region spans residues 347–368; it reads FEFAKRKLQESYHQHENAKRQR.

Belongs to the Mediator complex subunit 26 family. In terms of assembly, component of the Mediator complex.

It is found in the nucleus. In terms of biological role, component of the Mediator complex, a coactivator involved in the regulated transcription of nearly all RNA polymerase II-dependent genes. Mediator functions as a bridge to convey information from gene-specific regulatory proteins to the basal RNA polymerase II transcription machinery. The Mediator complex, having a compact conformation in its free form, is recruited to promoters by direct interactions with regulatory proteins and serves for the assembly of a functional preinitiation complex with RNA polymerase II and the general transcription factors. May play a role in transcription elongation. This Arabidopsis thaliana (Mouse-ear cress) protein is Probable mediator of RNA polymerase II transcription subunit 26a (MED26A).